A 471-amino-acid chain; its full sequence is MSNAKTLYEKIYDAHVAVAAEGENPILYIDRHLVHEVTSPQAFDGLREKGRKVRQVGKTFATMDHNVSTQTKDINASGEMARIQMETLSKNCEEFGVTLYDLNHKYQGIVHVMGPELGITLPGMTIVCGDSHTATHGAFGSLAFGIGTSEVEHVLATQTLKQARAKTMKIDVKGKVAEGITAKDIVLAIIGKTTAAGGTGYVVEFCGEAITDLTMEGRMTVCNMAIELGAKAGLIAPDQTTFDYIAGRKFSPQDADLDAAIEYWSSLKTDDDAEFDAVVTLDASEIKPQVTWGTNPGQVIAVDAPIPAPESFADPVEKASAEKALAYMGLEAGKSLSDYNVDKVFVGSCTNSRIEDMRAAAAIAKGRKVASHVQALIVPGSEQVKAQAEKEGLDVIFKEAGFEWRLPGCSMCLAMNNDRLGPHERCASTSNRNFEGRQGRDGRTHLVSPAMAAAAAIAGHFVDIRTITEQA.

Cysteine 349, cysteine 409, and cysteine 412 together coordinate [4Fe-4S] cluster.

Belongs to the aconitase/IPM isomerase family. LeuC type 1 subfamily. Heterodimer of LeuC and LeuD. [4Fe-4S] cluster is required as a cofactor.

The enzyme catalyses (2R,3S)-3-isopropylmalate = (2S)-2-isopropylmalate. The protein operates within amino-acid biosynthesis; L-leucine biosynthesis; L-leucine from 3-methyl-2-oxobutanoate: step 2/4. Catalyzes the isomerization between 2-isopropylmalate and 3-isopropylmalate, via the formation of 2-isopropylmaleate. The sequence is that of 3-isopropylmalate dehydratase large subunit from Aliivibrio fischeri (strain ATCC 700601 / ES114) (Vibrio fischeri).